The primary structure comprises 86 residues: DNA-directed RNA polymerase subunit omega (86 aa).

This sequence belongs to the RNA polymerase subunit omega family. The RNAP catalytic core consists of 2 alpha, 1 beta, 1 beta' and 1 omega subunit. When a sigma factor is associated with the core the holoenzyme is formed, which can initiate transcription.

The enzyme catalyses RNA(n) + a ribonucleoside 5'-triphosphate = RNA(n+1) + diphosphate. Promotes RNA polymerase assembly. Latches the N- and C-terminal regions of the beta' subunit thereby facilitating its interaction with the beta and alpha subunits. This chain is DNA-directed RNA polymerase subunit omega, found in Agathobacter rectalis (strain ATCC 33656 / DSM 3377 / JCM 17463 / KCTC 5835 / VPI 0990) (Eubacterium rectale).